Here is a 208-residue protein sequence, read N- to C-terminus: ATP-dependent Clp protease proteolytic subunit (208 aa).

Ser105 functions as the Nucleophile in the catalytic mechanism. The active site involves His130.

The protein belongs to the peptidase S14 family. In terms of assembly, fourteen ClpP subunits assemble into 2 heptameric rings which stack back to back to give a disk-like structure with a central cavity, resembling the structure of eukaryotic proteasomes.

The protein localises to the cytoplasm. The catalysed reaction is Hydrolysis of proteins to small peptides in the presence of ATP and magnesium. alpha-casein is the usual test substrate. In the absence of ATP, only oligopeptides shorter than five residues are hydrolyzed (such as succinyl-Leu-Tyr-|-NHMec, and Leu-Tyr-Leu-|-Tyr-Trp, in which cleavage of the -Tyr-|-Leu- and -Tyr-|-Trp bonds also occurs).. Cleaves peptides in various proteins in a process that requires ATP hydrolysis. Has a chymotrypsin-like activity. Plays a major role in the degradation of misfolded proteins. The polypeptide is ATP-dependent Clp protease proteolytic subunit (Xylella fastidiosa (strain M12)).